The sequence spans 93 residues: Co-chaperonin GroES (93 aa).

It belongs to the GroES chaperonin family. As to quaternary structure, heptamer of 7 subunits arranged in a ring. Interacts with the chaperonin GroEL.

The protein resides in the cytoplasm. Together with the chaperonin GroEL, plays an essential role in assisting protein folding. The GroEL-GroES system forms a nano-cage that allows encapsulation of the non-native substrate proteins and provides a physical environment optimized to promote and accelerate protein folding. GroES binds to the apical surface of the GroEL ring, thereby capping the opening of the GroEL channel. This is Co-chaperonin GroES from Streptococcus gordonii (strain Challis / ATCC 35105 / BCRC 15272 / CH1 / DL1 / V288).